Consider the following 32-residue polypeptide: Dermaseptin-L1 (32 aa).

As to expression, expressed by the skin glands.

The protein localises to the secreted. Antimicrobial peptide active against the Gram-negative bacterium E.coli (MIC=8 uM) but inactive against the Gram-positive bacterium S.aureus. Also inhibits growth of zoospores of the chytrid fungus B.dendrobatidis at high concentrations (above 25 uM). Shows anticancer activities since it is cytolytic against HepG2 human hepatoma-derived cells (LC(50)=45 uM). Is only weakly hemolytic on human erythrocytes. The polypeptide is Dermaseptin-L1 (Agalychnis lemur (Lemur leaf frog)).